Here is a 491-residue protein sequence, read N- to C-terminus: MSLKSERRGIHVDQSDLLCKKGCGYYGNPAWQGFCSKCWREEYHKARQKQIQEDWELAERLQREEEEAFASSQSSQGAQSLTFSKFEEKKTNEKTRKVTTVKKFFSASSRVGSKKEIQEAKAPSPSINRQTSIETDRVSKEFIEFLKTFHKTGQEIYKQTKLFLEGMHYKRDLSIEEQSECAQDFYHNVAERMQTRGKVPPERVEKIMDQIEKYIMTRLYKYVFCPETTDDEKKDLAIQKRIRALRWVTPQMLCVPVNEDIPEVSDMVVKAITDIIEMDSKRVPRDKLACITKCSKHIFNAIKITKNEPASADDFLPTLIYIVLKGNPPRLQSNIQYITRFCNPSRLMTGEDGYYFTNLCCAVAFIEKLDAQSLNLSQEDFDRYMSGQTSPRKQEAESWSPDACLGVKQMYKNLDLLSQLNERQERIMNEAKKLEKDLIDWTDGIAREVQDIVEKYPLEIKPPNQPLAAIDSENVENDKLPPPLQPQVYAG.

The interval 1–74 (MSLKSERRGI…EEEAFASSQS (74 aa)) is interaction with ubiquitinated proteins. The A20-type zinc finger occupies 13-47 (DQSDLLCKKGCGYYGNPAWQGFCSKCWREEYHKAR). 4 residues coordinate Zn(2+): Cys19, Cys23, Cys35, and Cys38. The interval 66-85 (EEAFASSQSSQGAQSLTFSK) is disordered. Residues 69–84 (FASSQSSQGAQSLTFS) show a composition bias toward low complexity. Residues Ser124 and Ser132 each carry the phosphoserine modification. An N6-acetyllysine mark is found at Lys151 and Lys170. The VPS9 domain maps to 232–375 (EKKDLAIQKR…IEKLDAQSLN (144 aa)). 4 positions are modified to phosphoserine: Ser373, Ser377, Ser390, and Ser400. The tract at residues 462 to 491 (PPNQPLAAIDSENVENDKLPPPLQPQVYAG) is disordered.

As to quaternary structure, interacts with RGS14; the interaction is GTP-dependent. Heterodimer with RABEP1. The heterodimer binds RAB4A and RAB5A that have been activated by GTP-binding. Interacts with RAB21, and with 100-fold lower affinity also with RAB22. Binds TSC2, GGA1, GGA2, GGA3, AP1G1 and AP1G2. Interacts with ubiquitinated EGFR. Monoubiquitinated.

The protein resides in the cytoplasm. Its subcellular location is the early endosome. It localises to the recycling endosome. Functionally, rab effector protein acting as linker between gamma-adaptin, RAB4A or RAB5A. Involved in endocytic membrane fusion and membrane trafficking of recycling endosomes. Stimulates nucleotide exchange on RAB5A. Can act as a ubiquitin ligase. In Homo sapiens (Human), this protein is Rab5 GDP/GTP exchange factor (RABGEF1).